We begin with the raw amino-acid sequence, 311 residues long: 4-hydroxy-3-methylbut-2-enyl diphosphate reductase (311 aa).

C12 is a [4Fe-4S] cluster binding site. (2E)-4-hydroxy-3-methylbut-2-enyl diphosphate is bound by residues H41 and H74. Dimethylallyl diphosphate-binding residues include H41 and H74. Isopentenyl diphosphate-binding residues include H41 and H74. C96 is a binding site for [4Fe-4S] cluster. H124 contributes to the (2E)-4-hydroxy-3-methylbut-2-enyl diphosphate binding site. H124 contacts dimethylallyl diphosphate. An isopentenyl diphosphate-binding site is contributed by H124. The active-site Proton donor is E126. Residue T168 participates in (2E)-4-hydroxy-3-methylbut-2-enyl diphosphate binding. C198 serves as a coordination point for [4Fe-4S] cluster. 4 residues coordinate (2E)-4-hydroxy-3-methylbut-2-enyl diphosphate: S226, S227, N228, and S270. Positions 226, 227, 228, and 270 each coordinate dimethylallyl diphosphate. Positions 226, 227, 228, and 270 each coordinate isopentenyl diphosphate.

It belongs to the IspH family. Requires [4Fe-4S] cluster as cofactor.

It carries out the reaction isopentenyl diphosphate + 2 oxidized [2Fe-2S]-[ferredoxin] + H2O = (2E)-4-hydroxy-3-methylbut-2-enyl diphosphate + 2 reduced [2Fe-2S]-[ferredoxin] + 2 H(+). The catalysed reaction is dimethylallyl diphosphate + 2 oxidized [2Fe-2S]-[ferredoxin] + H2O = (2E)-4-hydroxy-3-methylbut-2-enyl diphosphate + 2 reduced [2Fe-2S]-[ferredoxin] + 2 H(+). It functions in the pathway isoprenoid biosynthesis; dimethylallyl diphosphate biosynthesis; dimethylallyl diphosphate from (2E)-4-hydroxy-3-methylbutenyl diphosphate: step 1/1. It participates in isoprenoid biosynthesis; isopentenyl diphosphate biosynthesis via DXP pathway; isopentenyl diphosphate from 1-deoxy-D-xylulose 5-phosphate: step 6/6. Its function is as follows. Catalyzes the conversion of 1-hydroxy-2-methyl-2-(E)-butenyl 4-diphosphate (HMBPP) into a mixture of isopentenyl diphosphate (IPP) and dimethylallyl diphosphate (DMAPP). Acts in the terminal step of the DOXP/MEP pathway for isoprenoid precursor biosynthesis. The sequence is that of 4-hydroxy-3-methylbut-2-enyl diphosphate reductase from Alcanivorax borkumensis (strain ATCC 700651 / DSM 11573 / NCIMB 13689 / SK2).